Here is a 203-residue protein sequence, read N- to C-terminus: Imidazoleglycerol-phosphate dehydratase (203 aa).

The protein belongs to the imidazoleglycerol-phosphate dehydratase family.

The protein localises to the cytoplasm. It carries out the reaction D-erythro-1-(imidazol-4-yl)glycerol 3-phosphate = 3-(imidazol-4-yl)-2-oxopropyl phosphate + H2O. The protein operates within amino-acid biosynthesis; L-histidine biosynthesis; L-histidine from 5-phospho-alpha-D-ribose 1-diphosphate: step 6/9. This Salinispora tropica (strain ATCC BAA-916 / DSM 44818 / JCM 13857 / NBRC 105044 / CNB-440) protein is Imidazoleglycerol-phosphate dehydratase.